The chain runs to 158 residues: Glycosyl-phosphatidylinositol-anchored molecule-like protein (158 aa).

The N-terminal stretch at 1 to 17 (MLLFALLLAMELPLVAA) is a signal peptide. Residues 29–134 (LRCHDCAVIN…DEVTEEELPE (106 aa)) enclose the UPAR/Ly6 domain. Cystine bridges form between C31-C55, C34-C42, C48-C73, C77-C104, and C105-C110.

It is found in the cell membrane. May play a role in the apoptotic pathway or cell-cycle regulation induced by p53/TP53 after DNA damage. This Homo sapiens (Human) protein is Glycosyl-phosphatidylinositol-anchored molecule-like protein (GML).